A 299-amino-acid polypeptide reads, in one-letter code: N-acetylneuraminate lyase (299 aa).

2 residues coordinate aceneuramate: S45 and S46. Residue Y134 is the Proton donor of the active site. Residue K161 is the Schiff-base intermediate with substrate of the active site. Residues T163, G185, D187, and E188 each coordinate aceneuramate.

It belongs to the DapA family. NanA subfamily. As to quaternary structure, homotetramer.

It localises to the cytoplasm. The catalysed reaction is aceneuramate = aldehydo-N-acetyl-D-mannosamine + pyruvate. Its pathway is amino-sugar metabolism; N-acetylneuraminate degradation; D-fructose 6-phosphate from N-acetylneuraminate: step 1/5. Functionally, catalyzes the reversible aldol cleavage of N-acetylneuraminic acid (sialic acid; Neu5Ac) to form pyruvate and N-acetylmannosamine (ManNAc) via a Schiff base intermediate. The sequence is that of N-acetylneuraminate lyase from Rhizobium meliloti (strain 1021) (Ensifer meliloti).